Here is a 275-residue protein sequence, read N- to C-terminus: Shikimate dehydrogenase (NADP(+)) (275 aa).

Shikimate-binding positions include 17–19 and T64; that span reads SKS. The active-site Proton acceptor is K68. E80 contributes to the NADP(+) binding site. The shikimate site is built by N89 and D105. NADP(+) contacts are provided by residues 129–133, 152–157, and M216; these read GAGGA and NRTFFK. Y218 is a shikimate binding site. G240 contributes to the NADP(+) binding site.

The protein belongs to the shikimate dehydrogenase family. Homodimer.

The catalysed reaction is shikimate + NADP(+) = 3-dehydroshikimate + NADPH + H(+). It functions in the pathway metabolic intermediate biosynthesis; chorismate biosynthesis; chorismate from D-erythrose 4-phosphate and phosphoenolpyruvate: step 4/7. Its function is as follows. Involved in the biosynthesis of the chorismate, which leads to the biosynthesis of aromatic amino acids. Catalyzes the reversible NADPH linked reduction of 3-dehydroshikimate (DHSA) to yield shikimate (SA). The sequence is that of Shikimate dehydrogenase (NADP(+)) from Pectobacterium atrosepticum (strain SCRI 1043 / ATCC BAA-672) (Erwinia carotovora subsp. atroseptica).